The chain runs to 208 residues: dITP/XTP pyrophosphatase (208 aa).

16–21 (SNNKGK) lines the substrate pocket. The active-site Proton acceptor is the D79. Residue D79 coordinates Mg(2+). Substrate contacts are provided by residues S80, 166-169 (FGYD), K189, and 194-195 (HR).

Belongs to the HAM1 NTPase family. In terms of assembly, homodimer. It depends on Mg(2+) as a cofactor.

The catalysed reaction is XTP + H2O = XMP + diphosphate + H(+). It carries out the reaction dITP + H2O = dIMP + diphosphate + H(+). The enzyme catalyses ITP + H2O = IMP + diphosphate + H(+). Functionally, pyrophosphatase that catalyzes the hydrolysis of nucleoside triphosphates to their monophosphate derivatives, with a high preference for the non-canonical purine nucleotides XTP (xanthosine triphosphate), dITP (deoxyinosine triphosphate) and ITP. Seems to function as a house-cleaning enzyme that removes non-canonical purine nucleotides from the nucleotide pool, thus preventing their incorporation into DNA/RNA and avoiding chromosomal lesions. The polypeptide is dITP/XTP pyrophosphatase (Acinetobacter baumannii (strain AB307-0294)).